A 352-amino-acid polypeptide reads, in one-letter code: Homocitrate synthase, omega subunit (352 aa).

The protein belongs to the alpha-IPM synthase/homocitrate synthase family. As to quaternary structure, heterodimer of an alpha and an omega chain.

The catalysed reaction is acetyl-CoA + 2-oxoglutarate + H2O = (2R)-homocitrate + CoA + H(+). Functionally, this protein is a Fe-Mo-cofactor biosynthetic component. In Clostridium pasteurianum, this protein is Homocitrate synthase, omega subunit (nifV-OMEGA).